A 115-amino-acid polypeptide reads, in one-letter code: Divalent-cation tolerance protein CutA (115 aa).

Positions 19, 86, and 87 each coordinate Cu cation.

The protein belongs to the CutA family. Homotrimer. It depends on Cu cation as a cofactor.

It is found in the cytoplasm. Functionally, involved in resistance toward heavy metals. This Salmonella agona (strain SL483) protein is Divalent-cation tolerance protein CutA.